A 211-amino-acid chain; its full sequence is Large ribosomal subunit protein eL13 (211 aa).

Belongs to the eukaryotic ribosomal protein eL13 family. As to quaternary structure, component of the 60S large ribosomal subunit (LSU).

The protein localises to the cytoplasm. Functionally, component of the ribosome, a large ribonucleoprotein complex responsible for the synthesis of proteins in the cell. The small ribosomal subunit (SSU) binds messenger RNAs (mRNAs) and translates the encoded message by selecting cognate aminoacyl-transfer RNA (tRNA) molecules. The large subunit (LSU) contains the ribosomal catalytic site termed the peptidyl transferase center (PTC), which catalyzes the formation of peptide bonds, thereby polymerizing the amino acids delivered by tRNAs into a polypeptide chain. The nascent polypeptides leave the ribosome through a tunnel in the LSU and interact with protein factors that function in enzymatic processing, targeting, and the membrane insertion of nascent chains at the exit of the ribosomal tunnel. As part of the LSU, it is probably required for its formation and the maturation of rRNAs. The chain is Large ribosomal subunit protein eL13 (rpl13) from Danio rerio (Zebrafish).